A 562-amino-acid chain; its full sequence is Arginine--tRNA ligase (562 aa).

The 'HIGH' region signature appears at 122–132; the sequence is PNIAKDMHVGH.

It belongs to the class-I aminoacyl-tRNA synthetase family. In terms of assembly, monomer.

It is found in the cytoplasm. It catalyses the reaction tRNA(Arg) + L-arginine + ATP = L-arginyl-tRNA(Arg) + AMP + diphosphate. The chain is Arginine--tRNA ligase from Chlamydia felis (strain Fe/C-56) (Chlamydophila felis).